The following is a 94-amino-acid chain: Co-chaperonin GroES (94 aa).

This sequence belongs to the GroES chaperonin family. In terms of assembly, heptamer of 7 subunits arranged in a ring. Interacts with the chaperonin GroEL.

It localises to the cytoplasm. Together with the chaperonin GroEL, plays an essential role in assisting protein folding. The GroEL-GroES system forms a nano-cage that allows encapsulation of the non-native substrate proteins and provides a physical environment optimized to promote and accelerate protein folding. GroES binds to the apical surface of the GroEL ring, thereby capping the opening of the GroEL channel. The polypeptide is Co-chaperonin GroES (Streptococcus pneumoniae (strain ATCC 700669 / Spain 23F-1)).